We begin with the raw amino-acid sequence, 279 residues long: Dermonecrotic toxin LspiSicTox-betaIE3i (279 aa).

The active site involves histidine 5. Mg(2+) is bound by residues glutamate 25 and aspartate 27. The active-site Nucleophile is histidine 41. Disulfide bonds link cysteine 45/cysteine 51 and cysteine 47/cysteine 190. Aspartate 85 is a binding site for Mg(2+).

This sequence belongs to the arthropod phospholipase D family. Class II subfamily. Requires Mg(2+) as cofactor. As to expression, expressed by the venom gland.

It is found in the secreted. The catalysed reaction is an N-(acyl)-sphingosylphosphocholine = an N-(acyl)-sphingosyl-1,3-cyclic phosphate + choline. It carries out the reaction an N-(acyl)-sphingosylphosphoethanolamine = an N-(acyl)-sphingosyl-1,3-cyclic phosphate + ethanolamine. The enzyme catalyses a 1-acyl-sn-glycero-3-phosphocholine = a 1-acyl-sn-glycero-2,3-cyclic phosphate + choline. It catalyses the reaction a 1-acyl-sn-glycero-3-phosphoethanolamine = a 1-acyl-sn-glycero-2,3-cyclic phosphate + ethanolamine. Its function is as follows. Dermonecrotic toxins cleave the phosphodiester linkage between the phosphate and headgroup of certain phospholipids (sphingolipid and lysolipid substrates), forming an alcohol (often choline) and a cyclic phosphate. This toxin acts on sphingomyelin (SM). It may also act on ceramide phosphoethanolamine (CPE), lysophosphatidylcholine (LPC) and lysophosphatidylethanolamine (LPE), but not on lysophosphatidylserine (LPS), and lysophosphatidylglycerol (LPG). It acts by transphosphatidylation, releasing exclusively cyclic phosphate products as second products. Induces dermonecrosis, hemolysis, increased vascular permeability, edema, inflammatory response, and platelet aggregation. In Loxosceles spinulosa (Recluse spider), this protein is Dermonecrotic toxin LspiSicTox-betaIE3i.